Reading from the N-terminus, the 291-residue chain is tRNA U34 carboxymethyltransferase (291 aa).

Residues Lys61, Trp75, Lys80, Gly100, 122 to 124 (DPS), 149 to 150 (VE), Tyr169, and Arg284 each bind carboxy-S-adenosyl-L-methionine.

It belongs to the class I-like SAM-binding methyltransferase superfamily. CmoB family. As to quaternary structure, homotetramer.

The enzyme catalyses carboxy-S-adenosyl-L-methionine + 5-hydroxyuridine(34) in tRNA = 5-carboxymethoxyuridine(34) in tRNA + S-adenosyl-L-homocysteine + H(+). Catalyzes carboxymethyl transfer from carboxy-S-adenosyl-L-methionine (Cx-SAM) to 5-hydroxyuridine (ho5U) to form 5-carboxymethoxyuridine (cmo5U) at position 34 in tRNAs. The polypeptide is tRNA U34 carboxymethyltransferase (Campylobacter jejuni subsp. jejuni serotype O:23/36 (strain 81-176)).